The chain runs to 404 residues: Probable mannosyltransferase KTR3 (404 aa).

Residues 1–27 (MSVHHKKKLMPKSALLIRKYQKGIRSS) lie on the Cytoplasmic side of the membrane. A helical; Signal-anchor for type II membrane protein membrane pass occupies residues 28 to 44 (FIGLIIVLSFLFFMSGS). The interval 45 to 83 (RSPEVPIAQGTSVSRVASKDYLMPFTDKSQGVIHPVDDG) is stem region. At 45–404 (RSPEVPIAQG…AGNYKLPPGI (360 aa)) the chain is on the lumenal side. Positions 84 to 404 (KKEKGVMVTL…AGNYKLPPGI (321 aa)) are catalytic. Catalysis depends on Glu-295, which acts as the Nucleophile.

The protein belongs to the glycosyltransferase 15 family. As to quaternary structure, interacts with SVP26.

The protein resides in the membrane. Its function is as follows. Possible glycosyltransferase that transfers an alpha-D-mannosyl residue from GDP-mannose into lipid-linked oligosaccharide, forming an alpha-(1-&gt;2)-D-mannosyl-D-mannose linkage. This is Probable mannosyltransferase KTR3 (KTR3) from Saccharomyces cerevisiae (strain ATCC 204508 / S288c) (Baker's yeast).